A 201-amino-acid chain; its full sequence is Recombination protein RecR (201 aa).

The C4-type zinc finger occupies 60–75 (CSRCGNVDTVDPCTVC). The Toprim domain occupies 83-178 (SIIIVVEDVS…KITRLAHGVP (96 aa)).

This sequence belongs to the RecR family.

Functionally, may play a role in DNA repair. It seems to be involved in an RecBC-independent recombinational process of DNA repair. It may act with RecF and RecO. This Rhizobium leguminosarum bv. trifolii (strain WSM2304) protein is Recombination protein RecR.